Consider the following 125-residue polypeptide: Oxytocin-neurophysin 1 (125 aa).

The first 19 residues, 1 to 19 (MAGSSLACCLLGLLALTSA), serve as a signal peptide directing secretion. A disulfide bridge connects residues cysteine 20 and cysteine 25. A Glycine amide modification is found at glycine 28. Cystine bridges form between cysteine 41–cysteine 85, cysteine 44–cysteine 58, cysteine 52–cysteine 75, cysteine 59–cysteine 65, cysteine 92–cysteine 104, cysteine 98–cysteine 116, and cysteine 105–cysteine 110.

This sequence belongs to the vasopressin/oxytocin family. As to quaternary structure, interacts with oxytocin receptor (Ki=1.5 nM). Interacts with vasopressin V1aR/AVPR1A (Ki=37 nM), V1bR/AVPR1B (Ki=222 nM), and V2R/AVPR2 receptors (Ki=823 nM).

In terms of biological role, neurophysin 1 specifically binds oxytocin. Functionally, oxytocin causes contraction of the smooth muscle of the uterus and of the mammary gland. Acts by binding to oxytocin receptor (OXTR). In Ovis aries (Sheep), this protein is Oxytocin-neurophysin 1 (OXT).